Reading from the N-terminus, the 97-residue chain is Large ribosomal subunit protein uL23 (97 aa).

It belongs to the universal ribosomal protein uL23 family. As to quaternary structure, part of the 50S ribosomal subunit. Contacts protein L29, and trigger factor when it is bound to the ribosome.

Functionally, one of the early assembly proteins it binds 23S rRNA. One of the proteins that surrounds the polypeptide exit tunnel on the outside of the ribosome. Forms the main docking site for trigger factor binding to the ribosome. This is Large ribosomal subunit protein uL23 from Brucella anthropi (strain ATCC 49188 / DSM 6882 / CCUG 24695 / JCM 21032 / LMG 3331 / NBRC 15819 / NCTC 12168 / Alc 37) (Ochrobactrum anthropi).